Reading from the N-terminus, the 235-residue chain is Phosphoribosylaminoimidazole-succinocarboxamide synthase (235 aa).

It belongs to the SAICAR synthetase family.

It catalyses the reaction 5-amino-1-(5-phospho-D-ribosyl)imidazole-4-carboxylate + L-aspartate + ATP = (2S)-2-[5-amino-1-(5-phospho-beta-D-ribosyl)imidazole-4-carboxamido]succinate + ADP + phosphate + 2 H(+). The protein operates within purine metabolism; IMP biosynthesis via de novo pathway; 5-amino-1-(5-phospho-D-ribosyl)imidazole-4-carboxamide from 5-amino-1-(5-phospho-D-ribosyl)imidazole-4-carboxylate: step 1/2. This Caldanaerobacter subterraneus subsp. tengcongensis (strain DSM 15242 / JCM 11007 / NBRC 100824 / MB4) (Thermoanaerobacter tengcongensis) protein is Phosphoribosylaminoimidazole-succinocarboxamide synthase.